A 458-amino-acid chain; its full sequence is RuvB-like helicase 1 (458 aa).

71–78 (GGPGTGKT) contributes to the ATP binding site.

This sequence belongs to the RuvB family. May form heterododecamers with hel-2/rvb2. Component of the SWR1 chromatin remodeling complex, the INO80 chromatin remodeling complex, and of the R2TP complex.

It is found in the nucleus. It carries out the reaction ATP + H2O = ADP + phosphate + H(+). DNA helicase which participates in several chromatin remodeling complexes, including the SWR1 and the INO80 complexes. The SWR1 complex mediates the ATP-dependent exchange of histone H2A for the H2A variant H2A.Z leading to transcriptional regulation of selected genes by chromatin remodeling. The INO80 complex remodels chromatin by shifting nucleosomes and is involved in DNA repair. Also involved in pre-rRNA processing. The chain is RuvB-like helicase 1 (hel-1) from Neurospora crassa (strain ATCC 24698 / 74-OR23-1A / CBS 708.71 / DSM 1257 / FGSC 987).